A 1070-amino-acid chain; its full sequence is MLGDGNGGMSTIPGFNQIQFEGFCRFIDQGLAEELYKFPKIEDRDQEIEFQLFVETYQLVEPSIKERDAVYESLTYSSELYVSGGLIWKNSRDMQEQTIFIGNIPLMNSLGTSIVNGIYRIVINQILQSPGIYYRSELNHNGISVYTGTIISDWGGRVELEIDKKARIWARVSRKQKISILVLSSAMGLNLREILENVCYPEIFLSFLSDKEKKKIGSRENAILEFYQQFTCVGGGPVFSESLCKELQKKFFQQRCELGRIGRLNMNQRLNLDIPHNNTFLLPRDILAAADHLIGMKFGMGTLDDMNHLKNKRIRSVADLLQDQFGLALIRLENVVRGTICGAIRHKLIPTPQNLVTSTPLTTTYESFFGLHPLSQVLDRTNPLTQIVHGRKSSYLGPGGLTGRTASFRIRDIHPSHYGRICPIDTSEGINVGLIGSLTIHAKIGHLGSLESPFYEISARSKKVRMLYLSPNRDEYYMIAAGNCLALNRGAREEQVVPARYRQEFLTIAWEQVRLRSFFPFQYFSIGASLIPFIEHNDANRALMSSNMQRQAVPLARSEKCIVGTGLERQVALDSGVPAIAEHEGKIIYTDIDKIILSGNGYTVSIPLVMYQRSNKNTCMHQKTQVQRGKCIKRGQVLADGAATVGGELALGKNILVAYMPWEGYNFEDAVLISERLVYEDVYTSFHIRKYEIQTHVTSQGPERITNEIPHLEAHLLRNLDKNGIVMLGSWVETGDILIGKLTPQLAKESSYAPEDRLLRAILGIQVSTSKETCLKLPTGGRGRVIDVRWIQKKGGSSYNPETIRVYILQKREIKVGDKVAGRHGNKGIISKILPRQDMPYLQDGAPVDMVFNPLGVPSRMNVGQIFECSLGLAGSLLDRHYRVAPFDERYEQEASRKLVFSELYEAGKQTGNPWVFEPECPGKSRIFDGRTGDPFEQPVIIGKPYILKLIHQVADKIHGRSSGHYALVTQQPLRGRAKQGGQRVGEMEVWALEGFGVSHILQEMLTYKSDHIRARQEVLGTTISGRTIPKPEDAPESFRLLVRELRSLALELKHFLISEKNFQINRKEV.

It belongs to the RNA polymerase beta chain family. In terms of assembly, in plastids the minimal PEP RNA polymerase catalytic core is composed of four subunits: alpha, beta, beta', and beta''. When a (nuclear-encoded) sigma factor is associated with the core the holoenzyme is formed, which can initiate transcription.

It localises to the plastid. Its subcellular location is the chloroplast. The catalysed reaction is RNA(n) + a ribonucleoside 5'-triphosphate = RNA(n+1) + diphosphate. Functionally, DNA-dependent RNA polymerase catalyzes the transcription of DNA into RNA using the four ribonucleoside triphosphates as substrates. The polypeptide is DNA-directed RNA polymerase subunit beta (Populus trichocarpa (Western balsam poplar)).